The sequence spans 250 residues: 3-deoxy-manno-octulosonate cytidylyltransferase (250 aa).

Belongs to the KdsB family.

It is found in the cytoplasm. It carries out the reaction 3-deoxy-alpha-D-manno-oct-2-ulosonate + CTP = CMP-3-deoxy-beta-D-manno-octulosonate + diphosphate. It participates in nucleotide-sugar biosynthesis; CMP-3-deoxy-D-manno-octulosonate biosynthesis; CMP-3-deoxy-D-manno-octulosonate from 3-deoxy-D-manno-octulosonate and CTP: step 1/1. The protein operates within bacterial outer membrane biogenesis; lipopolysaccharide biosynthesis. Its function is as follows. Activates KDO (a required 8-carbon sugar) for incorporation into bacterial lipopolysaccharide in Gram-negative bacteria. The chain is 3-deoxy-manno-octulosonate cytidylyltransferase from Janthinobacterium sp. (strain Marseille) (Minibacterium massiliensis).